A 410-amino-acid chain; its full sequence is Large ribosomal subunit protein uL4 (410 aa).

Belongs to the universal ribosomal protein uL4 family.

The protein localises to the cytoplasm. This Tetrahymena thermophila (strain SB210) protein is Large ribosomal subunit protein uL4 (RPL4).